The following is a 217-amino-acid chain: Large ribosomal subunit protein uL29m (217 aa).

The protein belongs to the universal ribosomal protein uL29 family. As to quaternary structure, component of the mitochondrial large ribosomal subunit. Mature mitochondrial ribosomes consist of a small (37S) and a large (54S) subunit. The 37S subunit contains at least 33 different proteins and 1 molecule of RNA (15S). The 54S subunit contains at least 45 different proteins and 1 molecule of RNA (21S).

It is found in the mitochondrion. The chain is Large ribosomal subunit protein uL29m (mrpl4) from Aspergillus clavatus (strain ATCC 1007 / CBS 513.65 / DSM 816 / NCTC 3887 / NRRL 1 / QM 1276 / 107).